Consider the following 247-residue polypeptide: Probable transcriptional regulatory protein TDE_1487 (247 aa).

The protein belongs to the TACO1 family.

The protein localises to the cytoplasm. The chain is Probable transcriptional regulatory protein TDE_1487 from Treponema denticola (strain ATCC 35405 / DSM 14222 / CIP 103919 / JCM 8153 / KCTC 15104).